The following is a 659-amino-acid chain: Forkhead box protein P1-B (659 aa).

Composition is skewed to polar residues over residues 1–16 (MMQESGTEAANGTAHQ) and 32–41 (KSTTPSSDIT). Disordered regions lie at residues 1–41 (MMQE…SDIT) and 229–263 (ENSVTNNGHRGLDLSSPSPVPLKNHNQHGSTNGQY). The segment at 289–314 (GVCKWPGCEAVFEDFQSFLKHLNNEH) adopts a C2H2-type zinc-finger fold. The interval 331–352 (VQQLELQLAKDKERLQAMMTHL) is leucine-zipper. Residues 365 to 369 (PLNLV) are CTBP1-binding. The disordered stretch occupies residues 379 to 413 (PAASPPLSLPQTPTTPTAPLTPLSQTHSVITPTSL). The segment covering 387 to 404 (LPQTPTTPTAPLTPLSQT) has biased composition (low complexity). A DNA-binding region (fork-head) is located at residues 448 to 538 (RPPFTYASLI…PQKISGSPAL (91 aa)). The disordered stretch occupies residues 590-659 (GAMDHGNSNG…EDDHGTEDML (70 aa)). Over residues 595–605 (GNSNGSDSSPG) the composition is skewed to polar residues. Positions 641–659 (PDFDHHRDYEDDHGTEDML) are enriched in basic and acidic residues.

In terms of tissue distribution, shows complex and dynamic expression during early embryonic development. Prominent in many regions of the developing central nervous system, particularly in midbrain-hindbrain boundary, hindbrain and spinal cord. Strongly expressed in the retina, ear, branchial arches, hatching gland, heart, pronephric duct, gut, proctodeum, pectoral fin and swim bladder.

The protein localises to the nucleus. In terms of biological role, transcriptional repressor. The chain is Forkhead box protein P1-B (foxp1b) from Danio rerio (Zebrafish).